Consider the following 294-residue polypeptide: Melanocortin receptor 5 (294 aa).

Topologically, residues 1-29 are extracellular; it reads FLDLQLNATEGNVSGPSVGNTSSPCEDMG. N7, N12, and N20 each carry an N-linked (GlcNAc...) asparagine glycan. The helical transmembrane segment at 30-53 threads the bilayer; it reads IEVEVFLTLGLISLLENILVIGAI. The Cytoplasmic segment spans residues 54–65; it reads ARNKNLHVPMYF. A helical membrane pass occupies residues 66 to 89; the sequence is FVCSLAVADMLVSLSNSWETITIY. Residues 90 to 106 lie on the Extracellular side of the membrane; sequence LIANKHLVLSDTSVRHL. A helical membrane pass occupies residues 107-130; it reads DNVFDSMICISLVASMCSLLAVAV. The Cytoplasmic segment spans residues 131–147; sequence DRYVTIFYALRYQHLMT. Residues 148–171 traverse the membrane as a helical segment; the sequence is GRRCGAIIAGIWALCTGCGPVFIV. Topologically, residues 172 to 178 are extracellular; the sequence is YYESTYV. A helical transmembrane segment spans residues 179 to 203; that stretch reads VVCLVAMFLTMLLLMASLYAHMFLQ. Topologically, residues 204–231 are cytoplasmic; that stretch reads ARAHVRRIAALPGYRSARQRTSMKGAVT. Residues 232 to 257 traverse the membrane as a helical segment; the sequence is LAMLLGVFIVCWAPFFLHLILMISCP. Residues 258–265 lie on the Extracellular side of the membrane; that stretch reads QNLYCSCF. Residues 266–289 traverse the membrane as a helical segment; the sequence is MSHFNMYLILIMCNSVIDPLIYAF. Over 290 to 294 the chain is Cytoplasmic; the sequence is RSQEK.

The protein belongs to the G-protein coupled receptor 1 family.

The protein resides in the cell membrane. Its function is as follows. Receptor for MSH (alpha, beta and gamma) and ACTH. The activity of this receptor is mediated by G proteins which activate adenylate cyclase. This receptor is a possible mediator of the immunomodulation properties of melanocortins. The protein is Melanocortin receptor 5 (MC5R) of Sus scrofa (Pig).